The primary structure comprises 196 residues: MISAKLVKELRDRTGAGMMECKKALEEANGDIEKAIEVLRKRGIAKAAKKASRETGEGIIASYVHFNKKIGVLVELNCETDFVARTEEFQELGNKIAMHVAAMSPRWVKREDVPQEVIEKEKEIYREQLKDSGKPEHVIEKIIEGKLNKFFEENCLYEQKFAFDEEKMVEDMIKEAIAKIGENIKVSRFVKFTVGE.

The involved in Mg(2+) ion dislocation from EF-Tu stretch occupies residues 80-83 (TDFV).

Belongs to the EF-Ts family.

Its subcellular location is the cytoplasm. In terms of biological role, associates with the EF-Tu.GDP complex and induces the exchange of GDP to GTP. It remains bound to the aminoacyl-tRNA.EF-Tu.GTP complex up to the GTP hydrolysis stage on the ribosome. The polypeptide is Elongation factor Ts (Thermosipho melanesiensis (strain DSM 12029 / CIP 104789 / BI429)).